A 102-amino-acid chain; its full sequence is NADH-quinone oxidoreductase subunit K (102 aa).

The next 3 membrane-spanning stretches (helical) occupy residues 2 to 22, 26 to 46, and 58 to 78; these read LDFY…GVIL, IFTI…IFAT, and VIVM…LALI.

It belongs to the complex I subunit 4L family. NDH-1 is composed of 14 different subunits. Subunits NuoA, H, J, K, L, M, N constitute the membrane sector of the complex.

Its subcellular location is the cell inner membrane. The catalysed reaction is a quinone + NADH + 5 H(+)(in) = a quinol + NAD(+) + 4 H(+)(out). Functionally, NDH-1 shuttles electrons from NADH, via FMN and iron-sulfur (Fe-S) centers, to quinones in the respiratory chain. The immediate electron acceptor for the enzyme in this species is believed to be ubiquinone. Couples the redox reaction to proton translocation (for every two electrons transferred, four hydrogen ions are translocated across the cytoplasmic membrane), and thus conserves the redox energy in a proton gradient. In Campylobacter fetus subsp. fetus (strain 82-40), this protein is NADH-quinone oxidoreductase subunit K.